Here is a 110-residue protein sequence, read N- to C-terminus: MTLRWAMWLLLLAAWSMGYGEAFRCYTCEQPTAINSCKNIAQCKMEDTACKTVLETVEAAFPFNHSPMVTRSCSSSCLATDPDGIGVAHPVFCCFRDLCNSGFPGFVAGL.

A signal peptide spans 1 to 22 (MTLRWAMWLLLLAAWSMGYGEA). The region spanning 24–73 (RCYTCEQPTAINSCKNIAQCKMEDTACKTVLETVEAAFPFNHSPMVTRSC) is the UPAR/Ly6 domain. Cystine bridges form between Cys25–Cys50, Cys28–Cys37, Cys43–Cys73, Cys77–Cys93, and Cys94–Cys99.

In terms of assembly, homodimer. Interacts with PLAU. Interacts with CHRNA7. Expressed in skin, eye, whole lung, trachea, esophagus and stomach. Widely expressed in various tissues including spleen and thymus but not pancreas. Expressed in macrophages, dendritic cells, T and B cells. Expressed in lung specifically in ciliated bronchial epithelial cells (at protein level). Expression is decreased in lungs of asthmatic model mice. Expressed in the cornea.

The protein localises to the secreted. In terms of biological role, has an antitumor activity. Was found to be a marker of late differentiation of the skin. Implicated in maintaining the physiological and structural integrity of the keratinocyte layers of the skin. In vitro down-regulates keratinocyte proliferation; the function may involve the proposed role as modulator of nicotinic acetylcholine receptors (nAChRs) activity. In vitro inhibits alpha-7-dependent nAChR currents in an allosteric manner. In T cells may be involved in regulation of intracellular Ca(2+) signaling. Seems to have a immunomodulatory function in the cornea. The function may implicate a possible role as a scavenger receptor for PLAU thereby blocking PLAU-dependent functions of PLAUR such as in cell migration and proliferation. The polypeptide is Secreted Ly-6/uPAR-related protein 1 (Slurp1) (Mus musculus (Mouse)).